A 174-amino-acid chain; its full sequence is MQQALFGGGCFWCVEAVFLQIRGVEKVTSGYAGGHTTHPTYEQVCQGDTQHAEVVLIDFDEQQVTYSQLLDVFFATHDPTTLNRQGNDIGTQYRSVIYYFNEEQKQAAEHTIQTLKDDDLDIVTELSPAPTFYPAEDYHQNYYEKNPSQGYCNFAIPPKLLKLYSKFQHLMKDQ.

Residue Cys10 is part of the active site.

The protein belongs to the MsrA Met sulfoxide reductase family.

The catalysed reaction is L-methionyl-[protein] + [thioredoxin]-disulfide + H2O = L-methionyl-(S)-S-oxide-[protein] + [thioredoxin]-dithiol. It carries out the reaction [thioredoxin]-disulfide + L-methionine + H2O = L-methionine (S)-S-oxide + [thioredoxin]-dithiol. Has an important function as a repair enzyme for proteins that have been inactivated by oxidation. Catalyzes the reversible oxidation-reduction of methionine sulfoxide in proteins to methionine. This is Peptide methionine sulfoxide reductase MsrA from Acinetobacter baumannii (strain SDF).